Reading from the N-terminus, the 750-residue chain is GTP pyrophosphokinase rsh (750 aa).

One can recognise an HD domain in the interval 45-144 (YFSHPLEVAA…VKLADRLHNM (100 aa)). The TGS domain occupies 390–451 (DQVFCFTPKG…KNGDEVDIIR (62 aa)). The disordered stretch occupies residues 587-613 (AAKVDPAATTPKPGKRALPIRGTNPDL). One can recognise an ACT domain in the interval 676–750 (RISVSAINSP…SVSSAKRVNG (75 aa)).

It belongs to the RelA/SpoT family.

The enzyme catalyses GTP + ATP = guanosine 3'-diphosphate 5'-triphosphate + AMP. Functionally, functions as a (p)ppGpp synthase. In eubacteria ppGpp (guanosine 3'-diphosphate 5'-diphosphate) is a mediator of the stringent response that coordinates a variety of cellular activities in response to changes in nutritional abundance. It is necessary for persistence in mice, essential for intracellular growth of Brucella and required for expression of the type IV secretion system VirB and therefore plays a role in adaptation of Brucella to its intracellular host environment. The sequence is that of GTP pyrophosphokinase rsh (rsh) from Brucella melitensis biotype 1 (strain ATCC 23456 / CCUG 17765 / NCTC 10094 / 16M).